A 95-amino-acid chain; its full sequence is RING finger protein Z (95 aa).

The span at Met1 to Ser16 shows a compositional bias: low complexity. The disordered stretch occupies residues Met1–Val23. Gly2 carries the N-myristoyl glycine; by host lipid modification. The RING-type; atypical zinc finger occupies Cys40–Cys76. Positions Pro90–Pro93 match the PTAP/PSAP motif motif.

This sequence belongs to the arenaviridae Z protein family. In terms of assembly, interacts with protein NP; this interaction probably directs the encapsidated genome to budding sites. Interacts (via RING domain) with polymerase L; this interaction inhibits viral transcription and replication, Z partially blocks the product exit tunnel for the releasing nascent RNA product. Interacts with the glycoprotein complex; this interaction plays a role in virion budding. Interacts with host eIF4E; this interaction results in eIF4E reduced affinity for its substrate, the 5'-m7 G cap structure. Interacts (via late-budding domain) with host TSG101; this interaction is essential for budding and release of viral particles. Interacts with host RPLP0; this interaction may serve to load ribosome-like particles inside the virion. Interacts with host PML; this interaction induces PML bodies redistribution in the cytoplasm upon viral infection. In terms of processing, myristoylation is required for the role of RING finger protein Z in assembly and budding.

The protein localises to the virion. The protein resides in the host cytoplasm. It localises to the host perinuclear region. Its subcellular location is the host cell membrane. Its function is as follows. Plays a crucial role in virion assembly and budding. Expressed late in the virus life cycle, it acts as an inhibitor of viral transcription and RNA synthesis by interacting with the viral polymerase L. Presumably recruits the NP encapsidated genome to cellular membranes at budding sites via direct interaction with NP. Plays critical roles in the final steps of viral release by interacting with host TSG101, a member of the vacuolar protein-sorting pathway and using other cellular host proteins involved in vesicle formation pathway. The budding of the virus progeny occurs after association of protein Z with the viral glycoprotein complex SSP-GP1-GP2 at the cell periphery, step that requires myristoylation of protein Z. Also selectively represses protein production by associating with host eIF4E. In cell-based minigenome assay, has an inhibitory effect on the ribonucleoprotein machinery (vRNP), which is responsible for the replication and transcription of the viral genome. This chain is RING finger protein Z, found in Guanarito mammarenavirus (isolate Human/Venezuela/NH-95551/1990) (GTOV).